We begin with the raw amino-acid sequence, 656 residues long: Replication protein A 70 kDa DNA-binding subunit A (656 aa).

A DNA-binding region (OB) is located at residues A225 to L307. The C4-type zinc-finger motif lies at C516–C542.

This sequence belongs to the replication factor A protein 1 family. As to quaternary structure, heterotrimer of RPA1, RPA2 and RPA3 (canonical replication protein A complex). Interacts with RPA2B. In terms of tissue distribution, expressed in root tips, roots, shoot apical meristem (SAM), young leaves, flag leaves and ears, and at lower levels in mature leaves.

It localises to the nucleus. Functionally, component of the replication protein A complex (RPA) required for DNA recombination, repair and replication. The activity of RPA is mediated by single-stranded DNA binding and protein interactions. Plays an essential role in meiotic and somatic DNA repair, but is dispensable for DNA replication and homologous recombination. Is essential for normal progression through meiosis in pollen mother cells. Is involved in repair of double-strand DNA breaks (DSBs) induced by genotoxic stresses. The chain is Replication protein A 70 kDa DNA-binding subunit A (RPA1A) from Oryza sativa subsp. japonica (Rice).